Here is a 44-residue protein sequence, read N- to C-terminus: uncharacterized protein (44 aa).

This is an uncharacterized protein from Haemophilus influenzae (strain ATCC 51907 / DSM 11121 / KW20 / Rd).